Consider the following 214-residue polypeptide: Cell division protein SepF (214 aa).

A disordered region spans residues 24–120 (DNYEEYEERK…NTRRAQESTA (97 aa)). Positions 30 to 40 (EERKAVNEPPR) are enriched in basic and acidic residues. Residues 55–67 (ESYSQPAYTQQSE) show a composition bias toward polar residues. Residues 69–98 (VVEKPSARYRSAEAHQERDTQQAAYTEKKV) are compositionally biased toward basic and acidic residues. Residues 101–120 (MRSSNQSATTNTRRAQESTA) are compositionally biased toward polar residues.

Belongs to the SepF family. In terms of assembly, homodimer. Interacts with FtsZ.

The protein resides in the cytoplasm. Functionally, cell division protein that is part of the divisome complex and is recruited early to the Z-ring. Probably stimulates Z-ring formation, perhaps through the cross-linking of FtsZ protofilaments. Its function overlaps with FtsA. This is Cell division protein SepF from Enterococcus faecalis (strain ATCC 700802 / V583).